Here is a 551-residue protein sequence, read N- to C-terminus: Interleukin-2 receptor subunit beta (551 aa).

A signal peptide spans 1 to 26; sequence MAAPALSWRLPLLILLLPLATPWASA. Over 27 to 240 the chain is Extracellular; that stretch reads TVNGTSQFTC…TKPASLGKDT (214 aa). Asn29, Asn43, and Asn71 each carry an N-linked (GlcNAc...) asparagine glycan. An intrachain disulfide couples Cys36 to Cys46. Cysteines 74 and 86 form a disulfide. One can recognise a Fibronectin type-III domain in the interval 134 to 234; the sequence is APISLQVVHV…QPLAFRTKPA (101 aa). Residue Asn149 is glycosylated (N-linked (GlcNAc...) asparagine). Positions 220–224 match the WSXWS motif motif; that stretch reads WSPWS. A helical membrane pass occupies residues 241–265; it reads IPWLGHLLVGLSGAFGFIILVYLLI. Residues 266–551 are Cytoplasmic-facing; the sequence is NCRNTGPWLK…LQGQDPTHLV (286 aa). A Box 1 motif motif is present at residues 278–286; that stretch reads LKCHTPDPS. Disordered regions lie at residues 393 to 412 and 433 to 476; these read DEGV…QPLS and SLLG…GPPT.

The protein belongs to the type I cytokine receptor family. Type 4 subfamily. In terms of assembly, non-covalent dimer of an alpha and a beta subunit. IL2R exists in 3 different forms: a high affinity dimer, an intermediate affinity monomer (beta subunit), and a low affinity monomer (alpha subunit). The high and intermediate affinity forms also associate with a gamma subunit. Interacts with SHB upon interleukin stimulation.

It localises to the cell membrane. The protein localises to the cell surface. Its function is as follows. Receptor for interleukin-2. This beta subunit is involved in receptor mediated endocytosis and transduces the mitogenic signals of IL2. Probably in association with IL15RA, involved in the stimulation of neutrophil phagocytosis by IL15. This chain is Interleukin-2 receptor subunit beta (IL2RB), found in Pan troglodytes (Chimpanzee).